Reading from the N-terminus, the 463-residue chain is Glutathione amide reductase (463 aa).

Positions 2, 3, and 4 each coordinate Ni(2+). Residues 14 to 15, Glu-34, and Thr-41 contribute to the FAD site; that span reads SG. The cysteines at positions 42 and 47 are disulfide-linked. Residues Lys-50 and 113–114 each bind FAD; that span reads HA. Residue Lys-50 participates in NAD(+) binding. Residues 174–180, 197–198, Val-230, and Gly-261 contribute to the NAD(+) site; these read AGYIGIE and LE. FAD is bound by residues Asp-302 and 308–310; that span reads QLT. NAD(+)-binding residues include Gln-308 and Val-341. Position 437 (His-437) interacts with FAD. His-437 functions as the Proton acceptor in the catalytic mechanism.

It belongs to the class-I pyridine nucleotide-disulfide oxidoreductase family. In terms of assembly, homodimer. Requires FAD as cofactor.

It catalyses the reaction 2 glutathione amide + NAD(+) = glutathione amide disulfide + NADH + H(+). Catalyzes the reduction of glutathione amide disulfide (GASSAG) to restore glutathione amide (GASH) in the presence of NADH. May play a role in GASH metabolism under anaerobic conditions as a sulfide carrier necessary for cytoplasmic sulfide oxidation. This Marichromatium gracile (Chromatium gracile) protein is Glutathione amide reductase.